The primary structure comprises 109 residues: Nucleoid-associated protein MS1507 (109 aa).

The interval 1 to 21 (MFGKGGLGNLMKQAQQMQERM) is disordered.

Belongs to the YbaB/EbfC family. Homodimer.

It localises to the cytoplasm. The protein resides in the nucleoid. Its function is as follows. Binds to DNA and alters its conformation. May be involved in regulation of gene expression, nucleoid organization and DNA protection. This is Nucleoid-associated protein MS1507 from Mannheimia succiniciproducens (strain KCTC 0769BP / MBEL55E).